We begin with the raw amino-acid sequence, 506 residues long: Exoglucanase (506 aa).

The first 18 residues, 1–18 (MFPRSILLALSLTAVALG), serve as a signal peptide directing secretion. The segment at 19–450 (QQVGTNMAEN…IKFGDINSTF (432 aa)) is catalytic. Glu227 functions as the Nucleophile in the catalytic mechanism. The active-site Proton donor is the Glu232. An N-linked (GlcNAc...) asparagine glycan is attached at Asn308. The segment at 405–426 (ASPSQPGISRGTCSRDSGKPED) is disordered. A compositionally biased stretch (polar residues) spans 406–419 (SPSQPGISRGTCSR). An N-linked (GlcNAc...) asparagine glycan is attached at Asn447. Residues 449–472 (TFNNNGGGGGNPSPTTTRPNSPAQ) form a disordered region. The tract at residues 451 to 473 (NNNGGGGGNPSPTTTRPNSPAQT) is linker. Low complexity predominate over residues 460-470 (PSPTTTRPNSP). The 37-residue stretch at 470–506 (PAQTMWGQCGGQGWTGPTACQSPSTCHVINDFYSQCF) folds into the CBM1 domain. 2 cysteine pairs are disulfide-bonded: Cys478/Cys495 and Cys489/Cys505.

This sequence belongs to the glycosyl hydrolase 7 (cellulase C) family.

It carries out the reaction Hydrolysis of (1-&gt;4)-beta-D-glucosidic linkages in cellulose and cellotetraose, releasing cellobiose from the non-reducing ends of the chains.. Functionally, the biological conversion of cellulose to glucose generally requires three types of hydrolytic enzymes: (1) Endoglucanases which cut internal beta-1,4-glucosidic bonds; (2) Exocellobiohydrolases that cut the disaccharide cellobiose from the non-reducing end of the cellulose polymer chain; (3) Beta-1,4-glucosidases which hydrolyze the cellobiose and other short cello-oligosaccharides to glucose. This chain is Exoglucanase (cel2), found in Agaricus bisporus (White button mushroom).